The sequence spans 56 residues: Small ribosomal subunit protein bS21 (56 aa).

This sequence belongs to the bacterial ribosomal protein bS21 family.

The polypeptide is Small ribosomal subunit protein bS21 (Dictyoglomus thermophilum (strain ATCC 35947 / DSM 3960 / H-6-12)).